The sequence spans 567 residues: Dihydroxy-acid dehydratase (567 aa).

Cys52 contacts [2Fe-2S] cluster. Asp84 contributes to the Mg(2+) binding site. Position 125 (Cys125) interacts with [2Fe-2S] cluster. The Mg(2+) site is built by Asp126 and Lys127. Lys127 carries the N6-carboxylysine modification. Residue Cys197 coordinates [2Fe-2S] cluster. Glu448 lines the Mg(2+) pocket. Residue Ser474 is the Proton acceptor of the active site.

The protein belongs to the IlvD/Edd family. Homodimer. Requires [2Fe-2S] cluster as cofactor. It depends on Mg(2+) as a cofactor.

The enzyme catalyses (2R)-2,3-dihydroxy-3-methylbutanoate = 3-methyl-2-oxobutanoate + H2O. The catalysed reaction is (2R,3R)-2,3-dihydroxy-3-methylpentanoate = (S)-3-methyl-2-oxopentanoate + H2O. It functions in the pathway amino-acid biosynthesis; L-isoleucine biosynthesis; L-isoleucine from 2-oxobutanoate: step 3/4. The protein operates within amino-acid biosynthesis; L-valine biosynthesis; L-valine from pyruvate: step 3/4. In terms of biological role, functions in the biosynthesis of branched-chain amino acids. Catalyzes the dehydration of (2R,3R)-2,3-dihydroxy-3-methylpentanoate (2,3-dihydroxy-3-methylvalerate) into 2-oxo-3-methylpentanoate (2-oxo-3-methylvalerate) and of (2R)-2,3-dihydroxy-3-methylbutanoate (2,3-dihydroxyisovalerate) into 2-oxo-3-methylbutanoate (2-oxoisovalerate), the penultimate precursor to L-isoleucine and L-valine, respectively. This Streptococcus pneumoniae serotype 2 (strain D39 / NCTC 7466) protein is Dihydroxy-acid dehydratase.